Here is a 202-residue protein sequence, read N- to C-terminus: Ion-translocating oxidoreductase complex subunit G (202 aa).

A helical transmembrane segment spans residues 11-31 (ACLMGFFSFFSLSSVIFVKNI). Thr-176 is modified (FMN phosphoryl threonine).

Belongs to the RnfG family. The complex is composed of six subunits: RnfA, RnfB, RnfC, RnfD, RnfE and RnfG. FMN is required as a cofactor.

The protein localises to the cell inner membrane. In terms of biological role, part of a membrane-bound complex that couples electron transfer with translocation of ions across the membrane. This is Ion-translocating oxidoreductase complex subunit G from Buchnera aphidicola subsp. Schizaphis graminum (strain Sg).